Reading from the N-terminus, the 338-residue chain is MKNSADITVLGAGSYGTALAISLASNGHKTLLWGHDPAHMQTLAQDKCNQAFLPGIAFPECLHIEADLAKALAASNNVLVVVPSHVFGSVLAQAKPLLRQDARIVWATKGLEPETGRLLQDVARDVLGEQYPLAVLSGPTFAKELAMGLPTAISVAGTCPKFTAELVELLHSPKRLRVYANDDFIGLQLGGAVKNVIAIGAGMSDGIGFGANARTALITRGLVELTRLGEALGASTATFMGMAGLGDLVLTCTDNQSRNRRFGLALGKGCDVDTAQAEIGQVVEGYRNTKEVFTLAKRMGVEMPITEQIYQVLYQGKAPLDAAKELLSREKKSETPAQ.

Residues Ser14, Tyr15, His35, and Lys109 each coordinate NADPH. Residues Lys109, Gly138, and Thr140 each coordinate sn-glycerol 3-phosphate. Ala142 contributes to the NADPH binding site. Residues Lys194, Asp247, Ser257, Arg258, and Asn259 each contribute to the sn-glycerol 3-phosphate site. Catalysis depends on Lys194, which acts as the Proton acceptor. Arg258 provides a ligand contact to NADPH. NADPH is bound by residues Val282 and Glu284.

The protein belongs to the NAD-dependent glycerol-3-phosphate dehydrogenase family.

Its subcellular location is the cytoplasm. The enzyme catalyses sn-glycerol 3-phosphate + NAD(+) = dihydroxyacetone phosphate + NADH + H(+). It carries out the reaction sn-glycerol 3-phosphate + NADP(+) = dihydroxyacetone phosphate + NADPH + H(+). It participates in membrane lipid metabolism; glycerophospholipid metabolism. Functionally, catalyzes the reduction of the glycolytic intermediate dihydroxyacetone phosphate (DHAP) to sn-glycerol 3-phosphate (G3P), the key precursor for phospholipid synthesis. This chain is Glycerol-3-phosphate dehydrogenase [NAD(P)+], found in Shewanella sp. (strain MR-4).